The sequence spans 159 residues: Ribosome maturation factor RimP (159 aa).

Belongs to the RimP family.

The protein resides in the cytoplasm. Required for maturation of 30S ribosomal subunits. This chain is Ribosome maturation factor RimP, found in Geotalea daltonii (strain DSM 22248 / JCM 15807 / FRC-32) (Geobacter daltonii).